Consider the following 177-residue polypeptide: Large ribosomal subunit protein uL6 (177 aa).

Belongs to the universal ribosomal protein uL6 family. As to quaternary structure, part of the 50S ribosomal subunit.

This protein binds to the 23S rRNA, and is important in its secondary structure. It is located near the subunit interface in the base of the L7/L12 stalk, and near the tRNA binding site of the peptidyltransferase center. The polypeptide is Large ribosomal subunit protein uL6 (Zymomonas mobilis subsp. mobilis (strain ATCC 31821 / ZM4 / CP4)).